Consider the following 107-residue polypeptide: Antimicrobial peptide damicornin (107 aa).

The first 22 residues, 1 to 22 (MKVLVILFGAMLVLMEFQKASA), serve as a signal peptide directing secretion. The propeptide occupies 23-67 (ATLLEDFDDDDDLLDDGGDFDLEANSDASSGNGNDSNDAVPEKRR). Over residues 37-46 (DDGGDFDLEA) the composition is skewed to acidic residues. The disordered stretch occupies residues 37-62 (DDGGDFDLEANSDASSGNGNDSNDAV). Over residues 47 to 61 (NSDASSGNGNDSNDA) the composition is skewed to low complexity. Intrachain disulfides connect Cys69-Cys105, Cys78-Cys99, and Cys85-Cys103. Arg106 carries the arginine amide modification.

This sequence belongs to the coral AMP family. In terms of tissue distribution, is specifically expressed in the granular cells of the ectoderm.

Its subcellular location is the cytoplasm. The protein localises to the stress granule. The protein resides in the secreted. Functionally, cationic peptide with probable antimicrobial activity against coral pathogens. Shows in vitro activity against Gram-positive bacteria and the filamentous fungus F.oxysporum (MIC=1.25 uM). Gram-positive bacteria tested are B.megaterium (MIC=20 uM), S.aureus (MIC=5 uM), M. luteus (MIC=1.25 uM), B.stationis (MIC=10 uM), M.maritypicum (MIC=20 uM). Has no or little effect against Gram-negative bacteria (the coral pathogen V.coralliilyticus (MIC&gt;20 uM), V.aesturianus (MIC&gt;20 uM), V.shiloi (MIC&gt;20 uM), and E.coli (MIC=10 uM)). Has no hemolytic activity against sheep erythrocytes. This Pocillopora damicornis (Cauliflower coral) protein is Antimicrobial peptide damicornin.